The primary structure comprises 522 residues: F-box-like/WD repeat-containing protein TBL1XR1-B (522 aa).

The 33-residue stretch at S4–Q36 folds into the LisH domain. The 46-residue stretch at G41–A86 folds into the F-box-like domain. Positions A122–A150 are disordered. The segment covering T123 to G141 has biased composition (polar residues). WD repeat units lie at residues G175–S214, P231–L270, Q272–Q311, F314–T352, G355–D394, A397–T445, K448–S487, and R489–K522.

The protein belongs to the WD repeat EBI family. In terms of assembly, interacts with heterodimers of rxra and thrb, and this interaction is abrogated by thyroid hormone binding to thrb. Interacts with ncor1.

Its subcellular location is the nucleus. In terms of biological role, F-box-like protein which acts as an integral component of the N-CoR transcriptional corepressor complex. Probably regulates transcription activation mediated by nuclear receptors. May mediate the recruitment of the 19S proteasome complex, leading to the subsequent proteasomal degradation of the N-CoR complex, thereby allowing cofactor exchange and transcription activation. The polypeptide is F-box-like/WD repeat-containing protein TBL1XR1-B (tbl1xr1-b) (Xenopus laevis (African clawed frog)).